A 102-amino-acid chain; its full sequence is MYAIIKTGGKQIKVEAGQEIYIEKLDADVEGTVEFGEVLFVGGDDVKVGAPLVEGAKVVGTVVKHGRAKKITVFKMKAKKNYRRKQGHRQPYTKVRIEKIEA.

Belongs to the bacterial ribosomal protein bL21 family. Part of the 50S ribosomal subunit. Contacts protein L20.

Its function is as follows. This protein binds to 23S rRNA in the presence of protein L20. This Exiguobacterium sp. (strain ATCC BAA-1283 / AT1b) protein is Large ribosomal subunit protein bL21.